A 369-amino-acid chain; its full sequence is Aminomethyltransferase (369 aa).

This sequence belongs to the GcvT family. The glycine cleavage system is composed of four proteins: P, T, L and H.

It catalyses the reaction N(6)-[(R)-S(8)-aminomethyldihydrolipoyl]-L-lysyl-[protein] + (6S)-5,6,7,8-tetrahydrofolate = N(6)-[(R)-dihydrolipoyl]-L-lysyl-[protein] + (6R)-5,10-methylene-5,6,7,8-tetrahydrofolate + NH4(+). Its function is as follows. The glycine cleavage system catalyzes the degradation of glycine. The protein is Aminomethyltransferase of Xanthomonas axonopodis pv. citri (strain 306).